The chain runs to 142 residues: Large ribosomal subunit protein uL16 (142 aa).

Belongs to the universal ribosomal protein uL16 family. In terms of assembly, part of the 50S ribosomal subunit.

Functionally, binds 23S rRNA and is also seen to make contacts with the A and possibly P site tRNAs. This Pseudothermotoga lettingae (strain ATCC BAA-301 / DSM 14385 / NBRC 107922 / TMO) (Thermotoga lettingae) protein is Large ribosomal subunit protein uL16.